Here is a 227-residue protein sequence, read N- to C-terminus: PKHD-type hydroxylase BamMC406_4714 (227 aa).

The 101-residue stretch at 78–178 folds into the Fe2OG dioxygenase domain; the sequence is KVFPPLFNRY…RVASFFWIQS (101 aa). 3 residues coordinate Fe cation: His-96, Asp-98, and His-159. 2-oxoglutarate is bound at residue Arg-169.

Requires Fe(2+) as cofactor. The cofactor is L-ascorbate.

The polypeptide is PKHD-type hydroxylase BamMC406_4714 (Burkholderia ambifaria (strain MC40-6)).